The chain runs to 332 residues: DNA-directed RNA polymerase subunit alpha (332 aa).

An alpha N-terminal domain (alpha-NTD) region spans residues 1-231 (MVREKVTVST…DLFIPFLHME (231 aa)). Residues 262–332 (LSLESLFIDQ…FALDLPKNLN (71 aa)) are alpha C-terminal domain (alpha-CTD).

Belongs to the RNA polymerase alpha chain family. In plastids the minimal PEP RNA polymerase catalytic core is composed of four subunits: alpha, beta, beta', and beta''. When a (nuclear-encoded) sigma factor is associated with the core the holoenzyme is formed, which can initiate transcription.

Its subcellular location is the plastid. It catalyses the reaction RNA(n) + a ribonucleoside 5'-triphosphate = RNA(n+1) + diphosphate. In terms of biological role, DNA-dependent RNA polymerase catalyzes the transcription of DNA into RNA using the four ribonucleoside triphosphates as substrates. In Cuscuta japonica (Japanese dodder), this protein is DNA-directed RNA polymerase subunit alpha.